Consider the following 295-residue polypeptide: ATP synthase gamma chain (295 aa).

This sequence belongs to the ATPase gamma chain family. F-type ATPases have 2 components, CF(1) - the catalytic core - and CF(0) - the membrane proton channel. CF(1) has five subunits: alpha(3), beta(3), gamma(1), delta(1), epsilon(1). CF(0) has three main subunits: a, b and c.

It localises to the cell inner membrane. Functionally, produces ATP from ADP in the presence of a proton gradient across the membrane. The gamma chain is believed to be important in regulating ATPase activity and the flow of protons through the CF(0) complex. This chain is ATP synthase gamma chain, found in Chlorobium phaeobacteroides (strain BS1).